Reading from the N-terminus, the 189-residue chain is Isopentenyl-diphosphate Delta-isomerase (189 aa).

Residues His-27 and His-34 each contribute to the Mn(2+) site. Residues 32-171 (PLHFAFSTYI…PFVFSPWLVD (140 aa)) form the Nudix hydrolase domain. The active site involves Cys-69. A Mg(2+)-binding site is contributed by Cys-69. Residue His-71 coordinates Mn(2+). Glu-89 is a Mg(2+) binding site. Residues Glu-119 and Glu-121 each coordinate Mn(2+). Glu-121 is an active-site residue.

The protein belongs to the IPP isomerase type 1 family. Mg(2+) serves as cofactor. It depends on Mn(2+) as a cofactor.

It localises to the cytoplasm. The catalysed reaction is isopentenyl diphosphate = dimethylallyl diphosphate. The protein operates within isoprenoid biosynthesis; dimethylallyl diphosphate biosynthesis; dimethylallyl diphosphate from isopentenyl diphosphate: step 1/1. Its function is as follows. Catalyzes the 1,3-allylic rearrangement of the homoallylic substrate isopentenyl (IPP) to its highly electrophilic allylic isomer, dimethylallyl diphosphate (DMAPP). The protein is Isopentenyl-diphosphate Delta-isomerase of Corynebacterium glutamicum (strain ATCC 13032 / DSM 20300 / JCM 1318 / BCRC 11384 / CCUG 27702 / LMG 3730 / NBRC 12168 / NCIMB 10025 / NRRL B-2784 / 534).